Reading from the N-terminus, the 282-residue chain is 3-methyl-2-oxobutanoate hydroxymethyltransferase (282 aa).

Residues aspartate 45 and aspartate 84 each coordinate Mg(2+). Residues 45–46 (DS), aspartate 84, and lysine 114 each bind 3-methyl-2-oxobutanoate. Glutamate 116 serves as a coordination point for Mg(2+). Glutamate 183 functions as the Proton acceptor in the catalytic mechanism.

Belongs to the PanB family. In terms of assembly, homodecamer; pentamer of dimers. Requires Mg(2+) as cofactor.

Its subcellular location is the cytoplasm. It catalyses the reaction 3-methyl-2-oxobutanoate + (6R)-5,10-methylene-5,6,7,8-tetrahydrofolate + H2O = 2-dehydropantoate + (6S)-5,6,7,8-tetrahydrofolate. It functions in the pathway cofactor biosynthesis; (R)-pantothenate biosynthesis; (R)-pantoate from 3-methyl-2-oxobutanoate: step 1/2. Catalyzes the reversible reaction in which hydroxymethyl group from 5,10-methylenetetrahydrofolate is transferred onto alpha-ketoisovalerate to form ketopantoate. This chain is 3-methyl-2-oxobutanoate hydroxymethyltransferase, found in Syntrophobacter fumaroxidans (strain DSM 10017 / MPOB).